The following is a 510-amino-acid chain: Lysine--tRNA ligase (510 aa).

E420 and E427 together coordinate Mg(2+).

This sequence belongs to the class-II aminoacyl-tRNA synthetase family. In terms of assembly, homodimer. Mg(2+) is required as a cofactor.

It is found in the cytoplasm. It catalyses the reaction tRNA(Lys) + L-lysine + ATP = L-lysyl-tRNA(Lys) + AMP + diphosphate. The protein is Lysine--tRNA ligase (lysS) of Vibrio cholerae serotype O1 (strain ATCC 39315 / El Tor Inaba N16961).